We begin with the raw amino-acid sequence, 453 residues long: Ribulose bisphosphate carboxylase large chain (453 aa).

A propeptide spanning residues Met1–Ser2 is cleaved from the precursor. Pro3 is modified (N-acetylproline). Lys14 carries the N6,N6,N6-trimethyllysine modification. Residues Asn123 and Thr173 each contribute to the substrate site. Lys175 serves as the catalytic Proton acceptor. Residue Lys177 participates in substrate binding. Residues Lys201, Asp203, and Glu204 each contribute to the Mg(2+) site. Lys201 carries the N6-carboxylysine modification. His294 (proton acceptor) is an active-site residue. Substrate is bound by residues Arg295, His327, and Ser379.

Belongs to the RuBisCO large chain family. Type I subfamily. In terms of assembly, heterohexadecamer of 8 large chains and 8 small chains; disulfide-linked. The disulfide link is formed within the large subunit homodimers. Mg(2+) serves as cofactor. The disulfide bond which can form in the large chain dimeric partners within the hexadecamer appears to be associated with oxidative stress and protein turnover.

The protein localises to the plastid. The protein resides in the chloroplast. The enzyme catalyses 2 (2R)-3-phosphoglycerate + 2 H(+) = D-ribulose 1,5-bisphosphate + CO2 + H2O. The catalysed reaction is D-ribulose 1,5-bisphosphate + O2 = 2-phosphoglycolate + (2R)-3-phosphoglycerate + 2 H(+). RuBisCO catalyzes two reactions: the carboxylation of D-ribulose 1,5-bisphosphate, the primary event in carbon dioxide fixation, as well as the oxidative fragmentation of the pentose substrate in the photorespiration process. Both reactions occur simultaneously and in competition at the same active site. This Galium palustre (Common marsh bedstraw) protein is Ribulose bisphosphate carboxylase large chain.